Reading from the N-terminus, the 246-residue chain is MTPPKLPVREGRDALTPRPVSVQRGVNPHAPGSAHLKMGRTEILATVTLDDKPAPHMRGKKEGWLTAEYSMLPRSTTDRQARERNLQNGRRHEIQRLLGRALRSSMDLRPFKNQTLYVDCDVLVADGGTRVASVLAGHAALHDFCDRLINSGQLSEWPIVHNVGAISVGLIGDELRVDLDYEEDKVARADLNVIATDTGLLVEVQGGAELGPITVDEYTRLLSCGVASVQDVMRELTPQLAVIQGI.

Positions 1-33 (MTPPKLPVREGRDALTPRPVSVQRGVNPHAPGS) are disordered. Phosphate is bound by residues arginine 90 and 128-130 (GTR).

Belongs to the RNase PH family. In terms of assembly, homohexameric ring arranged as a trimer of dimers.

It catalyses the reaction tRNA(n+1) + phosphate = tRNA(n) + a ribonucleoside 5'-diphosphate. Functionally, phosphorolytic 3'-5' exoribonuclease that plays an important role in tRNA 3'-end maturation. Removes nucleotide residues following the 3'-CCA terminus of tRNAs; can also add nucleotides to the ends of RNA molecules by using nucleoside diphosphates as substrates, but this may not be physiologically important. Probably plays a role in initiation of 16S rRNA degradation (leading to ribosome degradation) during starvation. This chain is Ribonuclease PH, found in Deinococcus radiodurans (strain ATCC 13939 / DSM 20539 / JCM 16871 / CCUG 27074 / LMG 4051 / NBRC 15346 / NCIMB 9279 / VKM B-1422 / R1).